The sequence spans 454 residues: Immediate-early protein ICP-46 homolog (454 aa).

Residues 330 to 357 (EKDIETIEKYEKTIQELIVELHNLYLKR) are a coiled coil. The segment at 428-454 (SSPTASLSSLSPPSSNNNSPIRSPIRM) is disordered.

This sequence belongs to the IIV-6 393L family.

The chain is Immediate-early protein ICP-46 homolog from Invertebrate iridescent virus 6 (IIV-6).